The sequence spans 490 residues: Limb region 1 protein (490 aa).

Over 1–19 the chain is Extracellular; that stretch reads MEGQDEVSAREQHFHSQVR. A helical transmembrane segment spans residues 20–40; the sequence is ESTICFLLFAILYIVSYFIII. The Cytoplasmic portion of the chain corresponds to 41–62; sequence RYKRKSDEQEDEDAVVNRISLF. The chain crosses the membrane as a helical span at residues 63 to 83; sequence LSTFTLAVSAGAVLLLPFSII. Residues 84–110 are Extracellular-facing; it reads SNEILLAFPHNYYIQWLNGSLIHGLWN. Residues 111 to 131 form a helical membrane-spanning segment; it reads LASLFSNLCLFVLMPFAFFFL. Residues 132-151 lie on the Cytoplasmic side of the membrane; the sequence is ESEGFAGLKKGIRARILETL. A helical membrane pass occupies residues 152-172; it reads VMLLLLALLILGMVWVASALI. Residues 173-187 are Extracellular-facing; sequence DSDAASMESLYDLWE. The chain crosses the membrane as a helical span at residues 188-208; it reads FYLPYLYSCISLMGCLLLLLC. The Cytoplasmic segment spans residues 209-291; sequence TPVGLSRMFT…RKKASAWERN (83 aa). A coiled-coil region spans residues 256–287; the sequence is SSVEYNVMELEQELENVKILKTKLERRKKASA. The helical transmembrane segment at 292 to 312 threads the bilayer; sequence LVYPAVMVLLLIETSISVLLV. The Extracellular segment spans residues 313-339; the sequence is ACNILCLLVDETAMPKGTRGPGIGSAS. The chain crosses the membrane as a helical span at residues 340–360; the sequence is LSTFGFVGAALEIILIFYLMV. At 361–383 the chain is on the cytoplasmic side; it reads SSVVGFYSLRFFGNFTPKKDDTT. The chain crosses the membrane as a helical span at residues 384–404; sequence MTKIIGNCVSILVLSSALPVM. Topologically, residues 405–426 are extracellular; sequence SRTLGITRFDLLGDFGRFNWLG. Residues 427-447 traverse the membrane as a helical segment; sequence NFYIVLSYNLLFAIMTTLCLI. The Cytoplasmic segment spans residues 448 to 490; sequence RKFTSAVREELFKALGLHKLHLSDTSRDSETTKPSANGHQKAL.

The protein belongs to the LIMR family.

Its subcellular location is the membrane. In terms of biological role, putative membrane receptor. In Mus musculus (Mouse), this protein is Limb region 1 protein (Lmbr1).